The chain runs to 716 residues: MSLMGHGKVEMLLYAVPLLKAPNCLSSSMQLPHGGGRHQELVRFRDVAVVFSPEEWDHLTPEQRNLYKDVMLDNCKYLASLGNWTYKAHVMSSLKQGKEPWMMEREVTGDPCPACQPALATFRALNESGNAFRQSFHHGEYRTHRTFVQHYECDDCGMAFGHVSQLTGHQKIHKVGETHEYGENTRGFRHRSSFTMLQRICTLYKHFECNQCGETFNRPSKVIQHQSMHSGLKPYKCDVCQKAFRFLSSLSIHQRFHVGNRVNLTRHQKTHTQRKPFSCNFCGKTFHRFSEKTQHLLIHTRKKYYTCNYCKKEFNPYSKFILHQRTHTGEKPHKCDVCEKSFKSISNLNKHQKTHTGEKPFSCNECKKTFAQRTDLARHQQIHTGKKSFICSSCKKTFVRLSDLTQHKGTHTGERPYQCTTCEKAFKYRSNFTKHQKTHSIGRPFACNECGKTYRLNWELNQHKKIHTGEKPYECGECGKRFNNNSNLNKHKKIHTGEKHFVCNQCGKAFSLNSKLSRHQRTHNKKENSSKSVSNLNKHQKTHAGEKPFPCNECKKAFAQRMDLARHQQIHTGRKPFICSSCKKTFVRLSDLTQHKGTHTGERPYQCTTCEKAFKYQSNFTKHQKTHSIGRPFTCNECGKTFRLNWKLNQHKKIHTGEKPYECGECGKCFNNNSNLSKHKKIHTGEKHFVCNQCGKAFSLNSKLSRHQITHNKKKP.

Residues 42–113 form the KRAB domain; sequence VRFRDVAVVF…EREVTGDPCP (72 aa). 18 consecutive C2H2-type zinc fingers follow at residues 151–173, 207–229, 235–257, 277–299, 305–327, 333–355, 361–383, 389–411, 417–439, 445–467, 473–495, 501–523, 549–571, 577–599, 605–627, 633–655, 661–683, and 689–711; these read YECDDCGMAFGHVSQLTGHQKIH, FECNQCGETFNRPSKVIQHQSMH, YKCDVCQKAFRFLSSLSIHQRFH, FSCNFCGKTFHRFSEKTQHLLIH, YTCNYCKKEFNPYSKFILHQRTH, HKCDVCEKSFKSISNLNKHQKTH, FSCNECKKTFAQRTDLARHQQIH, FICSSCKKTFVRLSDLTQHKGTH, YQCTTCEKAFKYRSNFTKHQKTH, FACNECGKTYRLNWELNQHKKIH, YECGECGKRFNNNSNLNKHKKIH, FVCNQCGKAFSLNSKLSRHQRTH, FPCNECKKAFAQRMDLARHQQIH, YQCTTCEKAFKYQSNFTKHQKTH, FTCNECGKTFRLNWKLNQHKKIH, YECGECGKCFNNNSNLSKHKKIH, and FVCNQCGKAFSLNSKLSRHQITH. The disordered stretch occupies residues 515 to 548; it reads KLSRHQRTHNKKENSSKSVSNLNKHQKTHAGEKP.

It belongs to the krueppel C2H2-type zinc-finger protein family.

The protein resides in the nucleus. In terms of biological role, may be involved in transcriptional regulation. The sequence is that of Zinc finger protein 840 (ZNF840P) from Homo sapiens (Human).